We begin with the raw amino-acid sequence, 90 residues long: MANHKSTQKSIRQDQKRNLINKSRKSNVKTFLKRVTLAINAGDKKVASEALSAAHSKLAKAANKGIYKLNTVSRKVSRLSRKIKQLEDKI.

The span at 1–10 shows a compositional bias: polar residues; it reads MANHKSTQKS. Residues 1–25 are disordered; sequence MANHKSTQKSIRQDQKRNLINKSRK.

It belongs to the bacterial ribosomal protein bS20 family.

Binds directly to 16S ribosomal RNA. This Orientia tsutsugamushi (strain Ikeda) (Rickettsia tsutsugamushi) protein is Small ribosomal subunit protein bS20.